The following is a 144-amino-acid chain: Putative pre-16S rRNA nuclease (144 aa).

It belongs to the YqgF nuclease family.

It localises to the cytoplasm. Could be a nuclease involved in processing of the 5'-end of pre-16S rRNA. The protein is Putative pre-16S rRNA nuclease of Blochmanniella pennsylvanica (strain BPEN).